A 369-amino-acid polypeptide reads, in one-letter code: Flagellar P-ring protein (369 aa).

An N-terminal signal peptide occupies residues 1-24 (MKTLHRCIGVALLALGALAGTAHA).

The protein belongs to the FlgI family. As to quaternary structure, the basal body constitutes a major portion of the flagellar organelle and consists of four rings (L,P,S, and M) mounted on a central rod.

It is found in the periplasm. The protein resides in the bacterial flagellum basal body. Functionally, assembles around the rod to form the L-ring and probably protects the motor/basal body from shearing forces during rotation. In Ralstonia nicotianae (strain ATCC BAA-1114 / GMI1000) (Ralstonia solanacearum), this protein is Flagellar P-ring protein.